Here is an 823-residue protein sequence, read N- to C-terminus: Putative ankyrin repeat domain-containing protein 20A4 (823 aa).

ANK repeat units follow at residues 66-95 (QHRT…QIDV), 99-128 (ENRT…NPNL), 132-161 (YGNT…HIEA), 165-194 (DNNT…SSHA), and 198-227 (LRRS…DVFA). 2 disordered regions span residues 301 to 343 (VPEK…EVED) and 356 to 405 (QTLR…NICD). Positions 371-384 (EQQRHERSEKKQPQ) are enriched in basic and acidic residues. 3 coiled-coil regions span residues 431-480 (KKLK…KQLE), 565-724 (EMIT…NNST), and 776-806 (FVLE…KTEV).

This chain is Putative ankyrin repeat domain-containing protein 20A4, found in Homo sapiens (Human).